The primary structure comprises 179 residues: Protein LDB18 (179 aa).

May be involved in protein-linked oligosaccharide phosphorylation since the deletion reduces the negative charge of the cell surface. The chain is Protein LDB18 (LDB18) from Saccharomyces cerevisiae (strain ATCC 204508 / S288c) (Baker's yeast).